We begin with the raw amino-acid sequence, 176 residues long: Ribosome maturation factor RimM (176 aa).

Residues Glu100–Leu173 enclose the PRC barrel domain.

This sequence belongs to the RimM family. As to quaternary structure, binds ribosomal protein uS19.

It localises to the cytoplasm. Its function is as follows. An accessory protein needed during the final step in the assembly of 30S ribosomal subunit, possibly for assembly of the head region. Essential for efficient processing of 16S rRNA. May be needed both before and after RbfA during the maturation of 16S rRNA. It has affinity for free ribosomal 30S subunits but not for 70S ribosomes. The protein is Ribosome maturation factor RimM of Prochlorococcus marinus (strain MIT 9303).